A 320-amino-acid chain; its full sequence is uncharacterized protein (320 aa).

To S.pombe SpAC23H3.12c.

This is an uncharacterized protein from Saccharomyces cerevisiae (strain ATCC 204508 / S288c) (Baker's yeast).